A 166-amino-acid polypeptide reads, in one-letter code: Ribosome biogenesis regulatory protein homolog (166 aa).

2 positions are modified to phosphoserine: serine 34 and serine 64. A disordered region spans residues 144 to 166 (KEKKLTSKQVRNTSKKIKRSRRH). Over residues 156–166 (TSKKIKRSRRH) the composition is skewed to basic residues.

The protein belongs to the RRS1 family. As to quaternary structure, component of a hexameric 5S RNP precursor complex, composed of 5S RNA, rrs1, rpf2, rpl5a/rpl5b, rpl11a/rpl11b and syo1; this complex acts as a precursor for ribosome assembly. Interacts with sad1.

It localises to the nucleus. The protein localises to the nucleolus. Involved in ribosomal large subunit assembly. The chain is Ribosome biogenesis regulatory protein homolog from Schizosaccharomyces pombe (strain 972 / ATCC 24843) (Fission yeast).